Consider the following 294-residue polypeptide: 4-hydroxybenzoate octaprenyltransferase (294 aa).

8 helical membrane-spanning segments follow: residues 24–44, 47–67, 99–119, 139–159, 164–184, 213–233, 238–258, and 274–294; these read IGIL…ADGF, LHLI…GCVI, LLAA…DPLV, FLAI…PMGF, GEVP…AVAY, VAAV…VGIA, PWFF…YTLI, and NWVG…FPAA.

This sequence belongs to the UbiA prenyltransferase family. Mg(2+) serves as cofactor.

The protein localises to the cell inner membrane. It carries out the reaction all-trans-octaprenyl diphosphate + 4-hydroxybenzoate = 4-hydroxy-3-(all-trans-octaprenyl)benzoate + diphosphate. The protein operates within cofactor biosynthesis; ubiquinone biosynthesis. Catalyzes the prenylation of para-hydroxybenzoate (PHB) with an all-trans polyprenyl group. Mediates the second step in the final reaction sequence of ubiquinone-8 (UQ-8) biosynthesis, which is the condensation of the polyisoprenoid side chain with PHB, generating the first membrane-bound Q intermediate 3-octaprenyl-4-hydroxybenzoate. The chain is 4-hydroxybenzoate octaprenyltransferase from Aromatoleum aromaticum (strain DSM 19018 / LMG 30748 / EbN1) (Azoarcus sp. (strain EbN1)).